The following is a 123-amino-acid chain: Aspartate 1-decarboxylase (123 aa).

Serine 25 acts as the Schiff-base intermediate with substrate; via pyruvic acid in catalysis. Serine 25 bears the Pyruvic acid (Ser) mark. A substrate-binding site is contributed by threonine 57. The active-site Proton donor is the tyrosine 58. 73–75 (GAA) lines the substrate pocket.

Belongs to the PanD family. Heterooctamer of four alpha and four beta subunits. Requires pyruvate as cofactor. In terms of processing, is synthesized initially as an inactive proenzyme, which is activated by self-cleavage at a specific serine bond to produce a beta-subunit with a hydroxyl group at its C-terminus and an alpha-subunit with a pyruvoyl group at its N-terminus.

The protein localises to the cytoplasm. The catalysed reaction is L-aspartate + H(+) = beta-alanine + CO2. It functions in the pathway cofactor biosynthesis; (R)-pantothenate biosynthesis; beta-alanine from L-aspartate: step 1/1. Its function is as follows. Catalyzes the pyruvoyl-dependent decarboxylation of aspartate to produce beta-alanine. This is Aspartate 1-decarboxylase from Clostridium novyi (strain NT).